The following is a 696-amino-acid chain: Glycine--tRNA ligase beta subunit (696 aa).

It belongs to the class-II aminoacyl-tRNA synthetase family. As to quaternary structure, tetramer of two alpha and two beta subunits.

The protein resides in the cytoplasm. It catalyses the reaction tRNA(Gly) + glycine + ATP = glycyl-tRNA(Gly) + AMP + diphosphate. This Aromatoleum aromaticum (strain DSM 19018 / LMG 30748 / EbN1) (Azoarcus sp. (strain EbN1)) protein is Glycine--tRNA ligase beta subunit.